The following is a 248-amino-acid chain: Triosephosphate isomerase (248 aa).

The substrate site is built by Asn-12 and Lys-14. N6-acetyllysine is present on Lys-14. Tyr-68 carries the post-translational modification 3'-nitrotyrosine. His-96 acts as the Electrophile in catalysis. The residue at position 106 (Ser-106) is a Phosphoserine. Residue Lys-142 forms a Glycyl lysine isopeptide (Lys-Gly) (interchain with G-Cter in SUMO1) linkage. An N6-succinyllysine modification is found at Lys-149. N6-acetyllysine; alternate is present on Lys-156. Lys-156 carries the N6-succinyllysine; alternate modification. The active-site Proton acceptor is Glu-166. The residue at position 173 (Thr-173) is a Phosphothreonine. At Lys-194 the chain carries N6-acetyllysine; alternate. Lys-194 is subject to N6-succinyllysine; alternate. Lys-194 is modified (N6-methyllysine; alternate). Tyr-209 carries the post-translational modification 3'-nitrotyrosine. A Phosphoserine modification is found at Ser-212. The residue at position 214 (Thr-214) is a Phosphothreonine. Position 223 is a phosphoserine (Ser-223). Lys-238 carries the N6-acetyllysine modification.

Belongs to the triosephosphate isomerase family. In terms of assembly, homodimer.

Its subcellular location is the cytoplasm. The enzyme catalyses dihydroxyacetone phosphate = methylglyoxal + phosphate. It catalyses the reaction D-glyceraldehyde 3-phosphate = dihydroxyacetone phosphate. Its pathway is carbohydrate degradation; glycolysis; D-glyceraldehyde 3-phosphate from glycerone phosphate: step 1/1. It participates in carbohydrate biosynthesis; gluconeogenesis. Functionally, triosephosphate isomerase is an extremely efficient metabolic enzyme that catalyzes the interconversion between dihydroxyacetone phosphate (DHAP) and D-glyceraldehyde-3-phosphate (G3P) in glycolysis and gluconeogenesis. It is also responsible for the non-negligible production of methylglyoxal a reactive cytotoxic side-product that modifies and can alter proteins, DNA and lipids. In Sus scrofa (Pig), this protein is Triosephosphate isomerase (TPI1).